Consider the following 273-residue polypeptide: 2,3,4,5-tetrahydropyridine-2,6-dicarboxylate N-succinyltransferase (273 aa).

The substrate site is built by R104 and D141.

Belongs to the transferase hexapeptide repeat family. As to quaternary structure, homotrimer.

The protein localises to the cytoplasm. The catalysed reaction is (S)-2,3,4,5-tetrahydrodipicolinate + succinyl-CoA + H2O = (S)-2-succinylamino-6-oxoheptanedioate + CoA. It participates in amino-acid biosynthesis; L-lysine biosynthesis via DAP pathway; LL-2,6-diaminopimelate from (S)-tetrahydrodipicolinate (succinylase route): step 1/3. This chain is 2,3,4,5-tetrahydropyridine-2,6-dicarboxylate N-succinyltransferase, found in Neisseria meningitidis serogroup B (strain ATCC BAA-335 / MC58).